Reading from the N-terminus, the 839-residue chain is Phosphatidylinositol-glycan-specific phospholipase D (839 aa).

Residues 1–23 (MSAFRFWSGLLMLLGFLCPRSSP) form the signal peptide. Asn94, Asn271, Asn292, Asn307, and Asn321 each carry an N-linked (GlcNAc...) asparagine glycan. FG-GAP repeat units follow at residues 365–427 (SSPA…GLPR), 434–496 (KEAH…GQLS), 498–558 (SPNV…YSSR), 562–622 (NVEA…SPGR), 632–692 (QSWF…GSTR), 703–769 (SLLS…TVGD), and 787–839 (QYVL…LGQD). 3 N-linked (GlcNAc...) asparagine glycosylation sites follow: Asn500, Asn590, and Asn658.

This sequence belongs to the GPLD1 family. In terms of assembly, monomer. Post-translationally, glycosylated.

It is found in the secreted. It catalyses the reaction a 6-(alpha-D-glucosaminyl)-1-(1,2-diacyl-sn-glycero-3-phospho)-1D-myo-inositol + H2O = 6-(alpha-D-glucosaminyl)-1D-myo-inositol + a 1,2-diacyl-sn-glycero-3-phosphate + H(+). Its function is as follows. This protein hydrolyzes the inositol phosphate linkage in proteins anchored by phosphatidylinositol glycans (GPI-anchor) thus releasing these proteins from the membrane. The chain is Phosphatidylinositol-glycan-specific phospholipase D (GPLD1) from Bos taurus (Bovine).